We begin with the raw amino-acid sequence, 164 residues long: NADH-quinone oxidoreductase subunit I (164 aa).

4Fe-4S ferredoxin-type domains are found at residues 55-84 (RRYEGGEERCVACKLCEAICPAQAIYIEID) and 95-124 (KVYDIDLFKCIYCGLCEEACPVEAIVMGPY). [4Fe-4S] cluster contacts are provided by Cys64, Cys67, Cys70, Cys74, Cys104, Cys107, Cys110, and Cys114.

Belongs to the complex I 23 kDa subunit family. In terms of assembly, NDH-1 is composed of 14 different subunits. Subunits NuoA, H, J, K, L, M, N constitute the membrane sector of the complex. The cofactor is [4Fe-4S] cluster.

The protein localises to the cell inner membrane. It catalyses the reaction a quinone + NADH + 5 H(+)(in) = a quinol + NAD(+) + 4 H(+)(out). In terms of biological role, NDH-1 shuttles electrons from NADH, via FMN and iron-sulfur (Fe-S) centers, to quinones in the respiratory chain. The immediate electron acceptor for the enzyme in this species is believed to be ubiquinone. Couples the redox reaction to proton translocation (for every two electrons transferred, four hydrogen ions are translocated across the cytoplasmic membrane), and thus conserves the redox energy in a proton gradient. The polypeptide is NADH-quinone oxidoreductase subunit I (Magnetococcus marinus (strain ATCC BAA-1437 / JCM 17883 / MC-1)).